We begin with the raw amino-acid sequence, 400 residues long: Serine/threonine-protein kinase AFC3 (400 aa).

Positions 1–29 (MIANGFESMDKERVRKRPRMTWDEAPAEP) are disordered. Positions 71 to 396 (YKILSKMGEG…ANEALDHPFF (326 aa)) constitute a Protein kinase domain. Residues 77 to 85 (MGEGTFGRV) and Lys-100 each bind ATP. Asp-196 acts as the Proton acceptor in catalysis.

This sequence belongs to the protein kinase superfamily. CMGC Ser/Thr protein kinase family. Lammer subfamily.

It catalyses the reaction L-seryl-[protein] + ATP = O-phospho-L-seryl-[protein] + ADP + H(+). It carries out the reaction L-threonyl-[protein] + ATP = O-phospho-L-threonyl-[protein] + ADP + H(+). The catalysed reaction is L-tyrosyl-[protein] + ATP = O-phospho-L-tyrosyl-[protein] + ADP + H(+). The protein is Serine/threonine-protein kinase AFC3 (AFC3) of Arabidopsis thaliana (Mouse-ear cress).